The primary structure comprises 111 residues: Resistin-like beta (111 aa).

An N-terminal signal peptide occupies residues 1 to 23 (MGPSSCLLLILIPLLQLINPGST). 5 cysteine pairs are disulfide-bonded: Cys55/Cys108, Cys67/Cys107, Cys76/Cys93, Cys78/Cys95, and Cys82/Cys97.

It belongs to the resistin/FIZZ family. As to quaternary structure, homodimer; disulfide-linked. As to expression, expressed only in the gastrointestinal tract, particularly the colon.

The protein resides in the secreted. Probable hormone. This is Resistin-like beta (RETNLB) from Homo sapiens (Human).